Reading from the N-terminus, the 22-residue chain is Mu-conotoxin MIIIA (22 aa).

Glutamine 1 bears the Pyrrolidone carboxylic acid mark. Intrachain disulfides connect cysteine 3–cysteine 15, cysteine 4–cysteine 21, and cysteine 10–cysteine 22. Residue cysteine 22 is modified to Cysteine amide.

Belongs to the conotoxin M superfamily. In terms of tissue distribution, expressed by the venom duct.

It is found in the secreted. Its function is as follows. Mu-conotoxins block voltage-gated sodium channels (Nav). This synthetic toxin potently blocks rNav1.3/SCN3A. It also moderately blocks rNav1.1/SCN1A, rNav1.2/SCN2A, rNav1.4/SCN4A, mNav1.6/SCN8A, and Nav1.7/SCN9A. sodium channels. This block is very slowly reversible. This is Mu-conotoxin MIIIA from Conus magus (Magical cone).